The sequence spans 92 residues: UPF0223 protein SSA_0938 (92 aa).

The protein belongs to the UPF0223 family.

This Streptococcus sanguinis (strain SK36) protein is UPF0223 protein SSA_0938.